The chain runs to 1972 residues: Myosin-11 (1972 aa).

A phosphoserine mark is found at serine 8, serine 23, and serine 40. One can recognise a Myosin N-terminal SH3-like domain in the interval 31-81 (AAKRLVWVPSEKQGFEAASIKEEKGDEVVVELVENGKKVTVGKDDIQKMNP). In terms of domain architecture, Myosin motor spans 85–783 (SKVEDMAELT…VLAHLEEERD (699 aa)). At lysine 129 the chain carries N6,N6,N6-trimethyllysine. 178 to 185 (GESGAGKT) provides a ligand contact to ATP. Actin-binding regions lie at residues 661 to 683 (LGKL…IPNH) and 762 to 776 (RIGQ…GVLA). Residues 786–815 (ITDVIMAFQAMCRGYLARKAFAKRQQQLTA) form the IQ domain. Residues 844–1934 (LLQVTRQEEE…KSKLRRGNET (1091 aa)) are a coiled coil. A disordered region spans residues 858-882 (EDELQKTKERQQKAENELKELEQKH). Threonine 1177 carries the post-translational modification Phosphothreonine. Residues serine 1684 and serine 1722 each carry the phosphoserine modification. Disordered regions lie at residues 1744 to 1800 (ELEE…LRSK) and 1866 to 1972 (EQYK…KASE). Polar residues predominate over residues 1762–1788 (ATQQAEQLSNELATERSTAQKNESARQ). Composition is skewed to basic and acidic residues over residues 1789–1800 (QLERQNKELRSK) and 1866–1876 (EQYKEQAEKGN). The interval 1935–1972 (SFVPSRRSGGRRVIENADGSEEETDTRDADFNGTKASE) is C-terminal. A Phosphoserine modification is found at serine 1954. Position 1958 is a phosphothreonine (threonine 1958). The residue at position 1971 (serine 1971) is a Phosphoserine.

Belongs to the TRAFAC class myosin-kinesin ATPase superfamily. Myosin family. In terms of assembly, muscle myosin is a hexameric protein that consists of 2 heavy chain subunits (MHC), 2 alkali light chain subunits (MLC) and 2 regulatory light chain subunits (MLC-2). As to expression, smooth muscle; expressed in the umbilical artery, bladder, esophagus and trachea. Isoform 1 is mostly found in slowly contracting tonic muscles.

Its subcellular location is the melanosome. In terms of biological role, muscle contraction. In Homo sapiens (Human), this protein is Myosin-11 (MYH11).